Here is a 359-residue protein sequence, read N- to C-terminus: Small ribosomal subunit biogenesis GTPase RsgA (359 aa).

Positions 101–259 constitute a CP-type G domain; the sequence is KRKGSQAIAS…LMDNPGIREV (159 aa). Residues 149–152 and 201–209 contribute to the GTP site; these read NKKD and GSSGAGKST. Zn(2+)-binding residues include Cys284, Cys289, His291, and Cys297. The segment at 331-359 is disordered; the sequence is DPEEARKKKQKDKQMSKALQKRLKDKGRK. Basic residues predominate over residues 349 to 359; it reads LQKRLKDKGRK.

It belongs to the TRAFAC class YlqF/YawG GTPase family. RsgA subfamily. In terms of assembly, monomer. Associates with 30S ribosomal subunit, binds 16S rRNA. The cofactor is Zn(2+).

The protein localises to the cytoplasm. Functionally, one of several proteins that assist in the late maturation steps of the functional core of the 30S ribosomal subunit. Helps release RbfA from mature subunits. May play a role in the assembly of ribosomal proteins into the subunit. Circularly permuted GTPase that catalyzes slow GTP hydrolysis, GTPase activity is stimulated by the 30S ribosomal subunit. This Leptospira interrogans serogroup Icterohaemorrhagiae serovar copenhageni (strain Fiocruz L1-130) protein is Small ribosomal subunit biogenesis GTPase RsgA.